The following is a 256-amino-acid chain: 5-keto-4-deoxy-D-glucarate aldolase (256 aa).

His50 functions as the Proton acceptor in the catalytic mechanism. Position 151 (Gln151) interacts with substrate. Glu153 is a binding site for Mg(2+). Residues Ser178 and Asp179 each coordinate substrate. Asp179 provides a ligand contact to Mg(2+).

Belongs to the HpcH/HpaI aldolase family. KDGluc aldolase subfamily. As to quaternary structure, homohexamer; trimer of dimers. Mg(2+) is required as a cofactor.

It catalyses the reaction 5-dehydro-4-deoxy-D-glucarate = 2-hydroxy-3-oxopropanoate + pyruvate. It carries out the reaction 2-dehydro-3-deoxy-D-glucarate = 2-hydroxy-3-oxopropanoate + pyruvate. It participates in carbohydrate acid metabolism; galactarate degradation; D-glycerate from galactarate: step 2/3. Functionally, catalyzes the reversible retro-aldol cleavage of both 5-keto-4-deoxy-D-glucarate and 2-keto-3-deoxy-D-glucarate to pyruvate and tartronic semialdehyde. The protein is 5-keto-4-deoxy-D-glucarate aldolase of Shigella dysenteriae serotype 1 (strain Sd197).